Here is a 159-residue protein sequence, read N- to C-terminus: 2-C-methyl-D-erythritol 2,4-cyclodiphosphate synthase (159 aa).

A divalent metal cation is bound by residues D8 and H10. Residues D8–H10 and H34–S35 contribute to the 4-CDP-2-C-methyl-D-erythritol 2-phosphate site. H42 serves as a coordination point for a divalent metal cation. 4-CDP-2-C-methyl-D-erythritol 2-phosphate-binding positions include D56–G58, F61–D65, A100–A106, T132–E135, F139, and R142.

The protein belongs to the IspF family. Homotrimer. A divalent metal cation is required as a cofactor.

It carries out the reaction 4-CDP-2-C-methyl-D-erythritol 2-phosphate = 2-C-methyl-D-erythritol 2,4-cyclic diphosphate + CMP. It participates in isoprenoid biosynthesis; isopentenyl diphosphate biosynthesis via DXP pathway; isopentenyl diphosphate from 1-deoxy-D-xylulose 5-phosphate: step 4/6. In terms of biological role, involved in the biosynthesis of isopentenyl diphosphate (IPP) and dimethylallyl diphosphate (DMAPP), two major building blocks of isoprenoid compounds. Catalyzes the conversion of 4-diphosphocytidyl-2-C-methyl-D-erythritol 2-phosphate (CDP-ME2P) to 2-C-methyl-D-erythritol 2,4-cyclodiphosphate (ME-CPP) with a corresponding release of cytidine 5-monophosphate (CMP). The protein is 2-C-methyl-D-erythritol 2,4-cyclodiphosphate synthase of Cronobacter sakazakii (strain ATCC BAA-894) (Enterobacter sakazakii).